Consider the following 70-residue polypeptide: MAFLKKSLFLVLFLGLVNLSICEEEKREEENKEEEDENEALSEVKRGFLEKLKTGAKDFASAFVNSIKGT.

The first 22 residues, 1–22 (MAFLKKSLFLVLFLGLVNLSIC), serve as a signal peptide directing secretion. Residues 23–46 (EEEKREEENKEEEDENEALSEVKR) constitute a propeptide that is removed on maturation. The residue at position 68 (lysine 68) is a Lysine amide.

This sequence belongs to the frog skin active peptide (FSAP) family. Frenatin subfamily. In terms of tissue distribution, expressed by the skin glands.

It localises to the secreted. The protein localises to the target cell membrane. Its function is as follows. Peptide with unknown function. Does not show antimicrobial activity against S.aureus (MIC&gt;512 ug/mL), E.coli (MIC&gt;512 ug/mL) and C.albicans (MIC&gt;512 ug/mL). Does not show hemolytic activity. Antimicrobial peptide with activity against E.coli (MIC=128 ug/mL or 54 uM) and C.albicans (MIC=256 ug/mL or 108 uM). Does not show activity against S.aureus (MIC&gt;512 ug/mL). Does not show hemolytic activity. In Nyctimystes infrafrenatus (White-lipped tree frog), this protein is Frenatin 4.1.